Here is a 457-residue protein sequence, read N- to C-terminus: tRNA modification GTPase MnmE (457 aa).

Residues R25, E87, and R126 each contribute to the (6S)-5-formyl-5,6,7,8-tetrahydrofolate site. The TrmE-type G domain maps to 223 to 377 (GISTAIIGRP…IEERINNLFF (155 aa)). A K(+)-binding site is contributed by N233. GTP is bound by residues 233–238 (NVGKSS), 252–258 (TDIAGTT), and 277–280 (DTAG). S237 lines the Mg(2+) pocket. Residues T252, I254, and T257 each contribute to the K(+) site. T258 is a binding site for Mg(2+). K457 contributes to the (6S)-5-formyl-5,6,7,8-tetrahydrofolate binding site.

This sequence belongs to the TRAFAC class TrmE-Era-EngA-EngB-Septin-like GTPase superfamily. TrmE GTPase family. Homodimer. Heterotetramer of two MnmE and two MnmG subunits. The cofactor is K(+).

The protein resides in the cytoplasm. Its function is as follows. Exhibits a very high intrinsic GTPase hydrolysis rate. Involved in the addition of a carboxymethylaminomethyl (cmnm) group at the wobble position (U34) of certain tRNAs, forming tRNA-cmnm(5)s(2)U34. The sequence is that of tRNA modification GTPase MnmE from Streptococcus pneumoniae serotype 4 (strain ATCC BAA-334 / TIGR4).